The following is a 111-amino-acid chain: Putative G antigen family E member 3 (111 aa).

The interval 1–67 (MSEHVRTRSQ…EGAPAVQGPD (67 aa)) is disordered. Residues 8–24 (RSQSSERGNDQESSQPV) are compositionally biased toward polar residues. Residue T97 is modified to Phosphothreonine.

The protein belongs to the GAGE family.

The protein is Putative G antigen family E member 3 (PAGE2B) of Homo sapiens (Human).